The chain runs to 173 residues: Alpha-crystallin A chain (173 aa).

Met-1 bears the N-acetylmethionine mark. Positions 52-162 (LFRGFMDSGI…SHSERPIPVS (111 aa)) constitute a sHSP domain. Zn(2+) contacts are provided by His-100, Glu-102, His-107, and His-154. The segment at 146 to 173 (MMSGLDSSHSERPIPVSREEKPTSAPSS) is disordered. A compositionally biased stretch (basic and acidic residues) spans 153–167 (SHSERPIPVSREEKP).

It belongs to the small heat shock protein (HSP20) family. As to quaternary structure, heteropolymer composed of three CRYAA and one CRYAB subunits. Inter-subunit bridging via zinc ions enhances stability, which is crucial as there is no protein turn over in the lens. Can also form homodimers and homotetramers (dimers of dimers) which serve as the building blocks of homooligomers. Within homooligomers, the zinc-binding motif is created from residues of 3 different molecules. His-100 and Glu-102 from one molecule are ligands of the zinc ion, and His-107 and His-154 residues from additional molecules complete the site with tetrahedral coordination geometry.

The protein localises to the cytoplasm. It is found in the nucleus. Contributes to the transparency and refractive index of the lens. May act as a chaperone, preventing aggregation of various proteins under a wide range of stress conditions. This chain is Alpha-crystallin A chain (CRYAA), found in Aquarana catesbeiana (American bullfrog).